The sequence spans 31 residues: Cytochrome b6-f complex subunit 6 (31 aa).

Residues 4-24 traverse the membrane as a helical segment; sequence LTSYFGFLLAALTITFVLFIG.

This sequence belongs to the PetL family. In terms of assembly, the 4 large subunits of the cytochrome b6-f complex are cytochrome b6, subunit IV (17 kDa polypeptide, PetD), cytochrome f and the Rieske protein, while the 4 small subunits are PetG, PetL, PetM and PetN. The complex functions as a dimer.

The protein resides in the plastid. It is found in the chloroplast thylakoid membrane. In terms of biological role, component of the cytochrome b6-f complex, which mediates electron transfer between photosystem II (PSII) and photosystem I (PSI), cyclic electron flow around PSI, and state transitions. PetL is important for photoautotrophic growth as well as for electron transfer efficiency and stability of the cytochrome b6-f complex. In Oxybasis rubra (Red goosefoot), this protein is Cytochrome b6-f complex subunit 6.